A 264-amino-acid polypeptide reads, in one-letter code: MNQYHDLLERILSDGAEKHDRTGTGTLSIFGHQMRFNLASGFPMLTTKKLPLKSIVHELLWFLKGETNVRYLREHGVSIWDEWADANGDLGPVYGSQWRSWPAPDGRSIDQIANVVDMIGRSPDSRRLIVSAWNPADVDKMALPPCHCLFQFYVADGKLSCQLYQRSADVFLGVPFNIASYALLTMMVAQVTGLKPGDFVHSLGDAHLYLNHLDQARLQLTRPTRSLPTMTINPEVKSIFAFRYEDFKLENYDPHPHIKAEVAV.

DUMP-binding positions include R21 and 126–127 (RR). The active-site Nucleophile is C146. DUMP-binding positions include 166-169 (RSAD), N177, and 207-209 (HLY). D169 contributes to the (6R)-5,10-methylene-5,6,7,8-tetrahydrofolate binding site. A263 lines the (6R)-5,10-methylene-5,6,7,8-tetrahydrofolate pocket.

Belongs to the thymidylate synthase family. Bacterial-type ThyA subfamily. As to quaternary structure, homodimer.

It localises to the cytoplasm. The enzyme catalyses dUMP + (6R)-5,10-methylene-5,6,7,8-tetrahydrofolate = 7,8-dihydrofolate + dTMP. It functions in the pathway pyrimidine metabolism; dTTP biosynthesis. Functionally, catalyzes the reductive methylation of 2'-deoxyuridine-5'-monophosphate (dUMP) to 2'-deoxythymidine-5'-monophosphate (dTMP) while utilizing 5,10-methylenetetrahydrofolate (mTHF) as the methyl donor and reductant in the reaction, yielding dihydrofolate (DHF) as a by-product. This enzymatic reaction provides an intracellular de novo source of dTMP, an essential precursor for DNA biosynthesis. The sequence is that of Thymidylate synthase from Nitrobacter hamburgensis (strain DSM 10229 / NCIMB 13809 / X14).